A 169-amino-acid polypeptide reads, in one-letter code: Peptide deformylase (169 aa).

Fe cation-binding residues include C91 and H133. E134 is an active-site residue. H137 contacts Fe cation.

Belongs to the polypeptide deformylase family. Fe(2+) serves as cofactor.

It carries out the reaction N-terminal N-formyl-L-methionyl-[peptide] + H2O = N-terminal L-methionyl-[peptide] + formate. In terms of biological role, removes the formyl group from the N-terminal Met of newly synthesized proteins. Requires at least a dipeptide for an efficient rate of reaction. N-terminal L-methionine is a prerequisite for activity but the enzyme has broad specificity at other positions. The chain is Peptide deformylase from Klebsiella pneumoniae (strain 342).